We begin with the raw amino-acid sequence, 121 residues long: MRLSYVIVVIATSFLVTTEALSTNTGVQAANVVGPAQRLLRKHYTAAENDDDSEARALNTEKMKTMLKAGMTVDDYAAKLKLTDKIAAAANSARAMEKLGETLKMKKLLRYLNYVAEHTAV.

The signal sequence occupies residues 1 to 20 (MRLSYVIVVIATSFLVTTEA). Positions 38–56 (RLLRKHYTAAENDDDSEAR) match the RxLR-dEER motif. Residues 57 to 121 (ALNTEKMKTM…LNYVAEHTAV (65 aa)) are WY domain.

Belongs to the RxLR effector family. As to quaternary structure, homodimer. Interacts with host MAPKKK epsilon (via its kinase domain).

The protein localises to the secreted. It localises to the host cytoplasm. Its subcellular location is the host nucleus. Functionally, effector that enhances P.infestans colonization of Nicotiana benthamiana leaves. Induces a weak Cell death response in N.benthamiana. PexRD2-induced cell death is dependent on SGT1, suggesting that PexRD2 is recognized by the plant immune system. Interacts with the kinase domain of the host MAPKKK epsilon, a positive regulator of cell death associated with plant immunity, and perturbs signaling pathways triggered by MAPKKK epsilon. The sequence is that of RxLR effector protein PexRD2 from Phytophthora infestans (strain T30-4) (Potato late blight agent).